Consider the following 441-residue polypeptide: MGCCKVPALIQAQVEMGLVNDVEHKSLFRRDTDSPERKAASLMEQGSLSASFRECSTKTPNNSVLQSFKIVILSNKLNLLLPFGPLAILLHYLTDNKGWIFLLSLVGITPLAERLGYATEQLACYTGSTVGGLLNATFGNVTELIISIFALKSGMIRVVQLTLLGSILSNMLLVLGCAFFCGGLVFSQKEQVFDKGNAVVNSGLLLMAVMGLLFPAVLHYTHSEVHAGSSELALSRFSSCIMLVAYAAYLFFQLKSQPSSYTPLTEETNQNEETSDDDEDPEISKWEAIIWLSILTAWVSLLSGYLVDAIEGASVSWKIPISFISVILLPIVGNAAEHAGAIMFAMKDKLDLSLGVAIGSSIQISMFAVPFCVVIGWMMGAQMDLNFQLFETATLFITVIVVAFFLQEGTSNYFKGLMLILCYLIVAASFFVHEDPHQDDI.

Gly-2 carries N-myristoyl glycine lipidation. Residues Gly-2 to Lys-69 are Cytoplasmic-facing. S-palmitoyl cysteine attachment occurs at residues Cys-3 and Cys-4. A helical membrane pass occupies residues Ile-70–Leu-90. The Extracellular portion of the chain corresponds to His-91 to Lys-97. Residues Gly-98 to Ala-118 form a helical membrane-spanning segment. Topologically, residues Thr-119–Thr-129 are cytoplasmic. A helical transmembrane segment spans residues Val-130 to Ala-150. The interval Gly-139 to Val-174 is cation selection. Over Leu-151–Gly-165 the chain is Extracellular. A helical membrane pass occupies residues Ser-166–Phe-186. Over Ser-187–Asn-197 the chain is Cytoplasmic. Residues Ala-198 to Leu-218 form a helical membrane-spanning segment. At His-219 to Glu-231 the chain is on the extracellular side. Residues Leu-232–Phe-252 traverse the membrane as a helical segment. Over Gln-253–Trp-286 the chain is Cytoplasmic. Residues Glu-287–Val-307 form a helical membrane-spanning segment. Residues Asp-308–Glu-311 are Extracellular-facing. The helical transmembrane segment at Gly-312–Val-332 threads the bilayer. Residues Gly-333–Leu-354 lie on the Cytoplasmic side of the membrane. The cation selection stretch occupies residues Gly-333–Ala-368. Residues Gly-355 to Ile-375 form a helical membrane-spanning segment. Topologically, residues Gly-376 to Asp-384 are extracellular. The chain crosses the membrane as a helical span at residues Leu-385–Phe-405. The Cytoplasmic segment spans residues Leu-406 to Asn-412. The helical transmembrane segment at Tyr-413 to His-433 threads the bilayer. Topologically, residues Glu-434 to Ile-441 are extracellular.

The protein belongs to the Ca(2+):cation antiporter (CaCA) (TC 2.A.19) family. Cation/proton exchanger (CAX) subfamily.

It localises to the vacuole membrane. Vacuolar cation/proton exchanger (CAX). Translocates Ca(2+) and other metal ions into vacuoles using the proton gradient formed by H(+)-ATPase and H(+)-pyrophosphatase. The polypeptide is Vacuolar cation/proton exchanger 5 (CAX5) (Arabidopsis thaliana (Mouse-ear cress)).